The following is a 242-amino-acid chain: Placenta-expressed transcript 1 protein (242 aa).

The first 26 residues, 1 to 26 (MAILRSLLLPLGLLLCLWLLCSPASC), serve as a signal peptide directing secretion. The Extracellular segment spans residues 27–220 (TNSTTNCKPF…TTHKSSANRA (194 aa)). N-linked (GlcNAc...) asparagine glycosylation is found at Asn-28, Asn-81, and Asn-106. A disordered region spans residues 162-209 (VITTPTHKPTPAPPKPTTNPQKTTTNHSIPTTSLPKPTTSLYTSHPKL). Pro residues predominate over residues 169–178 (KPTPAPPKPT). The span at 179-205 (TNPQKTTTNHSIPTTSLPKPTTSLYTS) shows a compositional bias: low complexity. A helical membrane pass occupies residues 221–241 (FLCPVREAIQILFIFLIGTLL). Residue Phe-242 is a topological domain, cytoplasmic.

N-glycosylated.

It localises to the membrane. It is found in the apical cell membrane. Its function is as follows. Modulates leading keratinocyte migration and cellular adhesion to matrix proteins during a wound-healing response and promotes wound repair. May play a role during trichilemmal differentiation of the hair follicle. This Bos taurus (Bovine) protein is Placenta-expressed transcript 1 protein (PLET1).